Consider the following 598-residue polypeptide: (-)-endo-fenchol synthase, chloroplastic (598 aa).

The N-terminal 34 residues, 1–34 (MWSTISISMNVAILKKPLNFLHNSNNKASNPRCV), are a transit peptide targeting the chloroplast. Residues Asp-351, Asp-355, Asp-495, Thr-499, and Glu-503 each contribute to the Mg(2+) site. The DDXXD motif motif lies at 351–355 (DDVYD).

Belongs to the terpene synthase family. Requires Mg(2+) as cofactor. Mn(2+) serves as cofactor.

The protein resides in the plastid. It is found in the chloroplast. The catalysed reaction is (2E)-geranyl diphosphate + H2O = (1S,2S,4R)-endo-fenchol + diphosphate. The protein operates within secondary metabolite biosynthesis; terpenoid biosynthesis. Its function is as follows. Monoterpene synthase that catalyzes the formation of fenchol from geranyl diphosphate. In Ocimum basilicum (Sweet basil), this protein is (-)-endo-fenchol synthase, chloroplastic (FES).